The following is a 176-amino-acid chain: Epididymal-specific lipocalin-9 (176 aa).

A signal peptide spans 1-15 (MALLLLSLGLSLIAA). N-linked (GlcNAc...) asparagine glycosylation is found at asparagine 68 and asparagine 129. Residues cysteine 83 and cysteine 161 are joined by a disulfide bond.

It belongs to the calycin superfamily. Lipocalin family.

Its subcellular location is the secreted. The chain is Epididymal-specific lipocalin-9 from Homo sapiens (Human).